The following is a 237-amino-acid chain: RNA chaperone ProQ (237 aa).

A disordered region spans residues 106–188 (AKARVQAQRA…QPRPVPVTDI (83 aa)). Positions 146–158 (PRREAGAAPENRK) are enriched in basic and acidic residues.

Belongs to the ProQ family.

It localises to the cytoplasm. Its function is as follows. RNA chaperone with significant RNA binding, RNA strand exchange and RNA duplexing activities. May regulate ProP activity through an RNA-based, post-transcriptional mechanism. This chain is RNA chaperone ProQ, found in Yersinia pseudotuberculosis serotype O:1b (strain IP 31758).